The chain runs to 1238 residues: Lysine-specific demethylase JMJ703 (1238 aa).

Residues 56–79 form a disordered region; sequence EECQPSAAVSRSDTPCSTSGTQTC. A compositionally biased stretch (polar residues) spans 62–79; the sequence is AAVSRSDTPCSTSGTQTC. The region spanning 154 to 195 is the JmjN domain; the sequence is APVFYPTEEEFEDTLKYIESIRPMAEPYGICRIVPPSSWKPP. Residues 215–266 form a disordered region; that stretch reads KVDKLQNRKSSKKGRRGGMMKRRKLAESEENSATAHTQTGMQQSPERFGFEP. The segment covering 221–238 has biased composition (basic residues); that stretch reads NRKSSKKGRRGGMMKRRK. Over residues 245–259 the composition is skewed to polar residues; sequence NSATAHTQTGMQQSP. The JmjC domain maps to 348-514; the sequence is KYAQSGWNLN…IGHNAVELYR (167 aa). Fe cation contacts are provided by H394, E396, and H482. Disordered stretches follow at residues 699-725, 777-798, 834-863, and 910-978; these read GPRR…QKDE, YNGG…SSPS, TGDS…SSLE, and ASSQ…LQRT. A compositionally biased stretch (low complexity) spans 706 to 719; the sequence is SQASAVSLVSSSTS. The segment covering 910–923 has biased composition (polar residues); it reads ASSQQFVRTGPWTQ. Over residues 924 to 936 the composition is skewed to low complexity; the sequence is SASHEASSPSTSA. The span at 964 to 978 shows a compositional bias: polar residues; that stretch reads SFSNQQPNDGRLQRT. In terms of domain architecture, FYR N-terminal spans 1019–1077; the sequence is VVHRFKCSVEPLEIGVVLSGRLWSSSQAIFPKGFRSRVKYFSIVDPIQMAYYISEILDA. In terms of domain architecture, FYR C-terminal spans 1079–1169; it reads MQGPLFMVKL…HICTEYWRSR (91 aa).

Fe(2+) is required as a cofactor. As to expression, expressed in roots, leaf sheaths, stems and panicles.

Its subcellular location is the nucleus. It catalyses the reaction N(6),N(6),N(6)-trimethyl-L-lysyl(4)-[histone H3] + 3 2-oxoglutarate + 3 O2 = L-lysyl(4)-[histone H3] + 3 formaldehyde + 3 succinate + 3 CO2. Histone demethylase that demethylates 'Lys-4' (H3K4me) of histone H3 with a specific activity for H3K4me3, H3K4me2 and H3K4me1. No activity on H3K9me3/2/1, H3K27me3/2/1 and H3K36me3/2/1. Involved in the control of stem elongation by regulating methylation states of H3K4me3 on cytokinin oxidase (CKX) gene family, which may cause increased expression of CKX genes and reduced cytokinin levels. Prevents ectopic retrotransposition by regulating the levels of H3K4me3 in two non-LTR retrotransposons KARMA and LINE-1 (L1) and reinforcing their repressed states. This Oryza sativa subsp. japonica (Rice) protein is Lysine-specific demethylase JMJ703 (JMJ703).